Reading from the N-terminus, the 261-residue chain is Glucanase inhibitor protein 3 (261 aa).

A signal peptide spans 1–21 (MKVLSSLAAALIALSAVDVEA). The region spanning 29 to 260 (ILGGGKVPVG…GIEWINSVIK (232 aa)) is the Peptidase S1 domain. C56 and C72 are oxidised to a cystine. A glycan (N-linked (GlcNAc...) asparagine) is linked at N108. 2 disulfides stabilise this stretch: C183/C195 and C205/C236.

The protein belongs to the peptidase S1 family.

It is found in the secreted. In terms of biological role, secreted effector that suppresses host plant glucan elicitor-mediated defense responses. Targets host endoglucanases and inhibits the endoglucanase-mediated release of elicitor-active glucan oligosaccharides from P.sojae cell walls. In Phytophthora sojae (strain P6497) (Soybean stem and root rot agent), this protein is Glucanase inhibitor protein 3 (GIP3).